The following is a 359-amino-acid chain: 4-hydroxy-3-methylbut-2-en-1-yl diphosphate synthase (flavodoxin) (359 aa).

The [4Fe-4S] cluster site is built by C264, C267, C299, and E306.

Belongs to the IspG family. It depends on [4Fe-4S] cluster as a cofactor.

It carries out the reaction (2E)-4-hydroxy-3-methylbut-2-enyl diphosphate + oxidized [flavodoxin] + H2O + 2 H(+) = 2-C-methyl-D-erythritol 2,4-cyclic diphosphate + reduced [flavodoxin]. It participates in isoprenoid biosynthesis; isopentenyl diphosphate biosynthesis via DXP pathway; isopentenyl diphosphate from 1-deoxy-D-xylulose 5-phosphate: step 5/6. In terms of biological role, converts 2C-methyl-D-erythritol 2,4-cyclodiphosphate (ME-2,4cPP) into 1-hydroxy-2-methyl-2-(E)-butenyl 4-diphosphate. This Helicobacter pylori (strain ATCC 700392 / 26695) (Campylobacter pylori) protein is 4-hydroxy-3-methylbut-2-en-1-yl diphosphate synthase (flavodoxin).